The primary structure comprises 187 residues: MATTADFKNGMVLMIDGKLQQIVEFQHVKPGKGPAFVRTKLKDVVSGKTVDKTFNAGVKVEQATVDRRDMTYLYNDGSAYVLMDDKTFEQVELQPELMGDGAKFLLENSRVNVSFHDGQALFAELPANVDLKIEHTDPGLQGDRSTGGSKPATLETGAEIQVPLFIETGNVVKVDTRTGEYLSRVTQ.

The protein belongs to the elongation factor P family.

The protein localises to the cytoplasm. It participates in protein biosynthesis; polypeptide chain elongation. Functionally, involved in peptide bond synthesis. Stimulates efficient translation and peptide-bond synthesis on native or reconstituted 70S ribosomes in vitro. Probably functions indirectly by altering the affinity of the ribosome for aminoacyl-tRNA, thus increasing their reactivity as acceptors for peptidyl transferase. The sequence is that of Elongation factor P from Corynebacterium urealyticum (strain ATCC 43042 / DSM 7109).